The sequence spans 380 residues: Guanine nucleotide-binding protein subunit beta (380 aa).

7 WD repeats span residues 64–103 (GHSG…KTHA), 106–145 (LHCP…DRDG), 155–195 (GHKG…RISI), 203–243 (GHTA…RAVR), 247–286 (GHEG…QLQV), 296–335 (NELP…VVLN), and 342–380 (SHEG…RKIV).

Belongs to the WD repeat G protein beta family. As to quaternary structure, g proteins are composed of 3 units, alpha, beta and gamma. Interacts with the gamma subunits RGG1 and RGG2.

It is found in the cell membrane. In terms of biological role, guanine nucleotide-binding proteins (G proteins) are involved as modulators or transducers in various transmembrane signaling systems. The beta and gamma chains are required for the GTPase activity, for replacement of GDP by GTP, and for G protein-effector interaction. The sequence is that of Guanine nucleotide-binding protein subunit beta from Oryza sativa subsp. indica (Rice).